The chain runs to 355 residues: Protein RecA (355 aa).

67-74 is an ATP binding site; sequence GPESSGKT.

The protein belongs to the RecA family.

The protein resides in the cytoplasm. In terms of biological role, can catalyze the hydrolysis of ATP in the presence of single-stranded DNA, the ATP-dependent uptake of single-stranded DNA by duplex DNA, and the ATP-dependent hybridization of homologous single-stranded DNAs. It interacts with LexA causing its activation and leading to its autocatalytic cleavage. In Shewanella amazonensis (strain ATCC BAA-1098 / SB2B), this protein is Protein RecA.